A 116-amino-acid polypeptide reads, in one-letter code: Large ribosomal subunit protein bL19 (116 aa).

It belongs to the bacterial ribosomal protein bL19 family.

This protein is located at the 30S-50S ribosomal subunit interface and may play a role in the structure and function of the aminoacyl-tRNA binding site. The polypeptide is Large ribosomal subunit protein bL19 (Actinobacillus succinogenes (strain ATCC 55618 / DSM 22257 / CCUG 43843 / 130Z)).